The following is a 139-amino-acid chain: Small ribosomal subunit protein bS16 (139 aa).

The interval 84-139 (KGEPAPAPLLQPAEKAARPSFEAIGGEDEGKGEAITQKKKADKKDEAAAESSASEA) is disordered.

The protein belongs to the bacterial ribosomal protein bS16 family.

The polypeptide is Small ribosomal subunit protein bS16 (Streptomyces coelicolor (strain ATCC BAA-471 / A3(2) / M145)).